A 173-amino-acid polypeptide reads, in one-letter code: Lipoprotein signal peptidase (173 aa).

3 helical membrane passes run 11-31 (FGLIFAAVAFLLDQVTKWIVT), 69-89 (TTRWTLVAVTGIVAAAVAFWM), and 93-113 (QAKGDVIALALILGGALGNIV). Active-site residues include Asp-123 and Asp-142. Residues 134–154 (PFMIFNVADACITIGVLLLVA) traverse the membrane as a helical segment.

The protein belongs to the peptidase A8 family.

Its subcellular location is the cell inner membrane. It carries out the reaction Release of signal peptides from bacterial membrane prolipoproteins. Hydrolyzes -Xaa-Yaa-Zaa-|-(S,diacylglyceryl)Cys-, in which Xaa is hydrophobic (preferably Leu), and Yaa (Ala or Ser) and Zaa (Gly or Ala) have small, neutral side chains.. It participates in protein modification; lipoprotein biosynthesis (signal peptide cleavage). In terms of biological role, this protein specifically catalyzes the removal of signal peptides from prolipoproteins. The protein is Lipoprotein signal peptidase of Sphingopyxis alaskensis (strain DSM 13593 / LMG 18877 / RB2256) (Sphingomonas alaskensis).